Here is a 259-residue protein sequence, read N- to C-terminus: Trans-aconitate 2-methyltransferase (259 aa).

This sequence belongs to the methyltransferase superfamily. Tam family.

It localises to the cytoplasm. The enzyme catalyses trans-aconitate + S-adenosyl-L-methionine = (E)-3-(methoxycarbonyl)pent-2-enedioate + S-adenosyl-L-homocysteine. Catalyzes the S-adenosylmethionine monomethyl esterification of trans-aconitate. The protein is Trans-aconitate 2-methyltransferase of Variovorax paradoxus (strain S110).